The following is a 217-amino-acid chain: Adenylate kinase (217 aa).

10–15 contributes to the ATP binding site; that stretch reads GAGKGT. Positions 30–59 are NMP; the sequence is STGDMFREAIKRGTPLGRQAEVYIKGGRLV. Residues threonine 31, arginine 36, 57 to 59, 85 to 88, and glutamine 92 contribute to the AMP site; these read RLV and GFPR. The tract at residues 126 to 163 is LID; that stretch reads GRRVCRQCGATYHVRYNPPAVPGKCDACGQDLVQRADD. Arginine 127 is an ATP binding site. Cysteine 130 and cysteine 133 together coordinate Zn(2+). An ATP-binding site is contributed by 136 to 137; the sequence is TY. Zn(2+)-binding residues include cysteine 150 and cysteine 153. The AMP site is built by arginine 160 and arginine 171. Glutamine 199 lines the ATP pocket.

Belongs to the adenylate kinase family. In terms of assembly, monomer.

The protein resides in the cytoplasm. The enzyme catalyses AMP + ATP = 2 ADP. Its pathway is purine metabolism; AMP biosynthesis via salvage pathway; AMP from ADP: step 1/1. Functionally, catalyzes the reversible transfer of the terminal phosphate group between ATP and AMP. Plays an important role in cellular energy homeostasis and in adenine nucleotide metabolism. The sequence is that of Adenylate kinase from Moorella thermoacetica (strain ATCC 39073 / JCM 9320).